The chain runs to 330 residues: Ribosomal RNA small subunit methyltransferase C (330 aa).

This sequence belongs to the methyltransferase superfamily. RsmC family. Monomer.

Its subcellular location is the cytoplasm. The catalysed reaction is guanosine(1207) in 16S rRNA + S-adenosyl-L-methionine = N(2)-methylguanosine(1207) in 16S rRNA + S-adenosyl-L-homocysteine + H(+). In terms of biological role, specifically methylates the guanine in position 1207 of 16S rRNA in the 30S particle. This chain is Ribosomal RNA small subunit methyltransferase C, found in Haemophilus influenzae (strain PittEE).